Consider the following 739-residue polypeptide: Platelet endothelial cell adhesion molecule (739 aa).

A signal peptide spans 1–27 (MQLRWTQRGMMWLGALLTLLLCSSLKG). The Extracellular segment spans residues 28–599 (QENSFTINSI…TVRVYLPLEK (572 aa)). Ig-like C2-type domains are found at residues 35–120 (NSIH…EKTT), 145–213 (GGVV…IFSG), and 236–315 (PKFH…SKVS). N-linked (GlcNAc...) asparagine glycans are attached at residues asparagine 52, asparagine 84, and asparagine 151. The cysteines at positions 57 and 109 are disulfide-linked. 2 cysteine pairs are disulfide-bonded: cysteine 152–cysteine 206 and cysteine 256–cysteine 304. Residues asparagine 301, asparagine 320, asparagine 356, asparagine 371, asparagine 435, asparagine 446, asparagine 453, asparagine 550, and asparagine 578 are each glycosylated (N-linked (GlcNAc...) asparagine). 3 Ig-like C2-type domains span residues 328–403 (PKLE…VQIT), 424–493 (GQTI…EVLR), and 499–590 (PVDE…NTLT). Intrachain disulfides connect cysteine 347–cysteine 386, cysteine 431–cysteine 476, and cysteine 522–cysteine 571. Residues 600–618 (GLIAVVVIGVIIVTLVLGA) form a helical membrane-spanning segment. At 619–739 (KCYFLKKAKA…SRTEGSLDGS (121 aa)) the chain is on the cytoplasmic side. Cysteine 620 is lipidated: S-palmitoyl cysteine. Short sequence motifs (ITIM motif) lie at residues 687–692 (VEYTEV) and 712–717 (TVYSEI). 2 positions are modified to phosphotyrosine; by FER: tyrosine 689 and tyrosine 714. The tract at residues 708–730 (TETETVYSEIRKADPDFVENRYS) is membrane-bound segment which detaches upon phosphorylation. Positions 722–739 (PDFVENRYSRTEGSLDGS) are may play a role in cytoprotective signaling. Phosphoserine occurs at positions 730 and 735.

Trans-homodimer (via Ig-like C2-type 1 and Ig-like C2-type 2 domains); trans-homodimerization is required for cell-cell interaction. Forms a complex with BDKRB2 and GNAQ. Interacts with BDKRB2 and GNAQ. Interacts with PTPN11; Tyr-714 is critical for PTPN11 recruitment. Interacts with FER. Interacts with CD177; the interaction is Ca(2+)-dependent; the interaction is direct. Post-translationally, phosphorylated on Ser and Tyr residues by src kinases after cellular activation. Upon activation, phosphorylated on Ser-730 which probably initiates the dissociation of the membrane-interaction segment (residues 708-730) from the cell membrane allowing the sequential phosphorylation of Tyr-714 and Tyr-689. Constitutively phosphorylated on Ser-735 in resting platelets. Phosphorylated on tyrosine residues by FER and FES in response to FCER1 activation. In endothelial cells Fyn mediates mechanical-force (stretch or pull) induced tyrosine phosphorylation. In terms of processing, palmitoylation by ZDHHC21 is necessary for cell surface expression in endothelial cells and enrichment in membrane rafts.

Its subcellular location is the cell membrane. The protein localises to the membrane raft. It is found in the cell junction. Functionally, cell adhesion molecule which is required for leukocyte transendothelial migration (TEM) under most inflammatory conditions. Tyr-689 plays a critical role in TEM and is required for efficient trafficking of PECAM1 to and from the lateral border recycling compartment (LBRC) and is also essential for the LBRC membrane to be targeted around migrating leukocytes. Trans-homophilic interaction may play a role in endothelial cell-cell adhesion via cell junctions. Heterophilic interaction with CD177 plays a role in transendothelial migration of neutrophils. Homophilic ligation of PECAM1 prevents macrophage-mediated phagocytosis of neighboring viable leukocytes by transmitting a detachment signal. Promotes macrophage-mediated phagocytosis of apoptotic leukocytes by tethering them to the phagocytic cells; PECAM1-mediated detachment signal appears to be disabled in apoptotic leukocytes. Modulates bradykinin receptor BDKRB2 activation. Regulates bradykinin- and hyperosmotic shock-induced ERK1/2 activation in endothelial cells. Induces susceptibility to atherosclerosis. This is Platelet endothelial cell adhesion molecule (PECAM1) from Bos taurus (Bovine).